We begin with the raw amino-acid sequence, 231 residues long: Ferritin light chain (231 aa).

Positions Met1 to Ala19 are cleaved as a signal peptide. An intrachain disulfide couples Cys23 to Cys43. The Ferritin-like diiron domain occupies Tyr50 to Ile208. N-linked (GlcNAc...) asparagine glycosylation occurs at Asn134.

This sequence belongs to the ferritin family. In terms of assembly, oligomer of 12 light (L) chains and 12 heavy (H) chains; L and H chains are disulfide-linked. The functional molecule forms a roughly spherical shell with a diameter of 12 nm and contains a central cavity into which the insoluble ferric iron core is deposited.

The protein localises to the golgi apparatus. Its subcellular location is the secreted. In terms of biological role, stores iron in a soluble, non-toxic, readily available form. Important for iron homeostasis. Iron is taken up in the ferrous form and deposited as ferric hydroxides after oxidation. Ferritin is composed of a heavy (H) chain which is responsible for the oxidation and uptake of ferrous iron, and a light (L) chain which facilitates the nucleation of the ferrihydrite iron core. This chain is Ferritin light chain, found in Trichoplusia ni (Cabbage looper).